Here is a 197-residue protein sequence, read N- to C-terminus: Large ribosomal subunit protein uL11 (197 aa).

This sequence belongs to the universal ribosomal protein uL11 family. In terms of assembly, part of the ribosomal stalk of the 50S ribosomal subunit. Interacts with L10 and the large rRNA to form the base of the stalk. L10 forms an elongated spine to which L12 dimers bind in a sequential fashion forming a multimeric L10(L12)X complex. One or more lysine residues are methylated.

Its function is as follows. Forms part of the ribosomal stalk which helps the ribosome interact with GTP-bound translation factors. The sequence is that of Large ribosomal subunit protein uL11 from Mycoplasmopsis pulmonis (strain UAB CTIP) (Mycoplasma pulmonis).